Here is a 253-residue protein sequence, read N- to C-terminus: Chitooligosaccharide deacetylase (253 aa).

Mg(2+) is bound by residues H61 and H126.

Belongs to the YdjC deacetylase family. ChbG subfamily. Homodimer. Mg(2+) serves as cofactor.

The protein localises to the cytoplasm. The catalysed reaction is N,N'-diacetylchitobiose + H2O = N-acetyl-beta-D-glucosaminyl-(1-&gt;4)-D-glucosamine + acetate. It catalyses the reaction diacetylchitobiose-6'-phosphate + H2O = N'-monoacetylchitobiose-6'-phosphate + acetate. It functions in the pathway glycan degradation; chitin degradation. Involved in the degradation of chitin. ChbG is essential for growth on the acetylated chitooligosaccharides chitobiose and chitotriose but is dispensable for growth on cellobiose and chitosan dimer, the deacetylated form of chitobiose. Deacetylation of chitobiose-6-P and chitotriose-6-P is necessary for both the activation of the chb promoter by the regulatory protein ChbR and the hydrolysis of phosphorylated beta-glucosides by the phospho-beta-glucosidase ChbF. Catalyzes the removal of only one acetyl group from chitobiose-6-P to yield monoacetylchitobiose-6-P, the inducer of ChbR and the substrate of ChbF. The polypeptide is Chitooligosaccharide deacetylase (Yersinia pseudotuberculosis serotype O:1b (strain IP 31758)).